Here is a 301-residue protein sequence, read N- to C-terminus: Small ribosomal subunit protein uS2 (301 aa).

This sequence belongs to the universal ribosomal protein uS2 family.

This Acidobacterium capsulatum (strain ATCC 51196 / DSM 11244 / BCRC 80197 / JCM 7670 / NBRC 15755 / NCIMB 13165 / 161) protein is Small ribosomal subunit protein uS2.